Here is a 110-residue protein sequence, read N- to C-terminus: Small ribosomal subunit protein uS10 (110 aa).

The protein belongs to the universal ribosomal protein uS10 family. As to quaternary structure, part of the 30S ribosomal subunit.

Functionally, involved in the binding of tRNA to the ribosomes. The chain is Small ribosomal subunit protein uS10 from Ehrlichia ruminantium (strain Gardel).